The sequence spans 348 residues: Ion-translocating oxidoreductase complex subunit D (348 aa).

4 consecutive transmembrane segments (helical) span residues 23-43, 44-64, 72-91, and 126-146; these read WVLACALPGLIAQTYFFGYGT, LIQLLLAISVAVALEAGIMLL, ALRDYSAVVTAWLLAVAIPP, and IAYVVLLISFPVQMTSWMAPI. Threonine 187 is subject to FMN phosphoryl threonine. 5 helical membrane-spanning segments follow: residues 214–234, 243–263, 266–286, 300–320, and 321–341; these read FAGIGWEWVNIAYLLGGLILL, IPMAMLAGLVFTALLAQLFAP, TASPMIHLLSGATMLGAFFIA, LIYGFFIGAMVFLIRSWGGFP, and DGVAFAVLLANMCVPLIDYYT.

Belongs to the NqrB/RnfD family. In terms of assembly, the complex is composed of six subunits: RnfA, RnfB, RnfC, RnfD, RnfE and RnfG. The cofactor is FMN.

It localises to the cell inner membrane. In terms of biological role, part of a membrane-bound complex that couples electron transfer with translocation of ions across the membrane. The polypeptide is Ion-translocating oxidoreductase complex subunit D (Vibrio cholerae serotype O1 (strain ATCC 39315 / El Tor Inaba N16961)).